The sequence spans 200 residues: 3-isopropylmalate dehydratase small subunit (200 aa).

The protein belongs to the LeuD family. LeuD type 1 subfamily. In terms of assembly, heterodimer of LeuC and LeuD.

The enzyme catalyses (2R,3S)-3-isopropylmalate = (2S)-2-isopropylmalate. It functions in the pathway amino-acid biosynthesis; L-leucine biosynthesis; L-leucine from 3-methyl-2-oxobutanoate: step 2/4. Functionally, catalyzes the isomerization between 2-isopropylmalate and 3-isopropylmalate, via the formation of 2-isopropylmaleate. This chain is 3-isopropylmalate dehydratase small subunit, found in Sodalis glossinidius (strain morsitans).